The following is a 2035-amino-acid chain: Ral GTPase-activating protein subunit alpha-1 (2035 aa).

Disordered stretches follow at residues 343-384 and 477-496; these read LVSR…SSLC and DGEK…VRNS. A compositionally biased stretch (basic and acidic residues) spans 345-365; sequence SREESKNDTVDKVDKSAEPEQ. 2 stretches are compositionally biased toward polar residues: residues 366–384 and 486–496; these read SHSN…SSLC and GTSTSEHVRNS. Serine 710 and serine 720 each carry phosphoserine. The disordered stretch occupies residues 714-752; the sequence is SFSRGWSRDQPGQAPMRQRSATTTGSPGTEKARSIVRQK. Threonine 753 is subject to Phosphothreonine. Serine 772 is subject to Phosphoserine. Threonine 777 bears the Phosphothreonine mark. Serine 796 is subject to Phosphoserine. Basic and acidic residues predominate over residues 807-817; sequence ERAKVNKEDTS. Disordered stretches follow at residues 807 to 834 and 848 to 911; these read ERAK…SANV and SGNA…SHSD. Composition is skewed to polar residues over residues 824–833 and 849–862; these read NSETGGNSAN and GNAS…SSPG. Residues serine 859, serine 860, and serine 863 each carry the phosphoserine modification. The span at 894–911 shows a compositional bias: low complexity; that stretch reads SPASAGSSDLMSSDSHSD. Phosphoserine is present on residues serine 985, serine 989, serine 993, and serine 999. Over residues 986–1008 the composition is skewed to polar residues; sequence ESASPVHSALGSRSQTPSPSTLS. The segment at 986–1011 is disordered; the sequence is ESASPVHSALGSRSQTPSPSTLSRAH. Threonine 1001 bears the Phosphothreonine mark. Residues serine 1003 and serine 1477 each carry the phosphoserine modification. The segment at 1326 to 2035 is minimal domain that binds to TCF3/E12; that stretch reads FTNKTVAHVA…YHHFPADADH (710 aa). Residues 1713–1748 adopt a coiled-coil conformation; sequence SEKQENDVINAILKQYTEEKEFVEKHFNDLNMKASE. Positions 1795 to 2003 constitute a Rap-GAP domain; it reads LRNLDSRQCR…EERARYLQTI (209 aa).

As to quaternary structure, component of the heterodimeric RalGAP1 complex with RALGAPB. Heterodimerization is required for activity. Interacts with the HLH region of TCF3/isoform E12. As to expression, expressed during embryogenesis. Expressed in the adult brain, particularly in neurons of the cortex and hippocampus.

Its subcellular location is the cytoplasm. It is found in the nucleus. Functionally, catalytic subunit of the heterodimeric RalGAP1 complex which acts as a GTPase activator for the Ras-like small GTPases RALA and RALB. May interact with the HLH region of TCF3/isoform E12. The protein is Ral GTPase-activating protein subunit alpha-1 (Ralgapa1) of Mus musculus (Mouse).